A 240-amino-acid chain; its full sequence is Uridylate kinase (240 aa).

13-16 contacts ATP; it reads KISG. G55 is a binding site for UMP. ATP is bound by residues G56 and R60. UMP is bound by residues D75 and 136–143; that span reads TGNPFFTT. T163, Q164, Y169, and D172 together coordinate ATP.

This sequence belongs to the UMP kinase family. In terms of assembly, homohexamer.

It localises to the cytoplasm. The enzyme catalyses UMP + ATP = UDP + ADP. The protein operates within pyrimidine metabolism; CTP biosynthesis via de novo pathway; UDP from UMP (UMPK route): step 1/1. Inhibited by UTP. Catalyzes the reversible phosphorylation of UMP to UDP. This is Uridylate kinase from Paramagnetospirillum magneticum (strain ATCC 700264 / AMB-1) (Magnetospirillum magneticum).